Here is a 225-residue protein sequence, read N- to C-terminus: Glutathione S-transferase-like protein tpcF (225 aa).

One can recognise a GST N-terminal domain in the interval 4–85 (IQPITVYGKG…YLVSHYDPDH (82 aa)). In terms of domain architecture, GST C-terminal spans 92 to 225 (GSNLAALATQ…KGMADIFPST (134 aa)).

This sequence belongs to the GST superfamily. In terms of tissue distribution, specifically expressed in conidia.

It participates in secondary metabolite biosynthesis. Glutathione S-transferase-like protein; part of the gene cluster that mediates the biosynthesis of trypacidin, a mycotoxin with antiprotozoal activity and that plays a role in the infection process. The pathway begins with the synthesis of atrochrysone thioester by the polyketide synthase (PKS) tpcC. The atrochrysone carboxyl ACP thioesterase tpcB then breaks the thioester bond and releases the atrochrysone carboxylic acid from tpcC. The decarboxylase tpcK converts atrochrysone carboxylic acid to atrochrysone which is further reduced into emodin anthrone. The next step is performed by the emodin anthrone oxygenase tpcL that catalyzes the oxidation of emodinanthrone to emodin. Emodin O-methyltransferase encoded by tpcA catalyzes methylation of the 8-hydroxy group of emodin to form questin. Ring cleavage of questin by questin oxidase tpcI leads to desmethylsulochrin via several intermediates including questin epoxide. Another methylation step catalyzed by tpcM leads to the formation of sulochrin which is further converted to monomethylsulfochrin by tpcH. Finally, the tpcJ catalyzes the conversion of monomethylsulfochrin to trypacidin. Trypacidin is toxic for human pulmonary and bronchial epithelial cells by initiating the intracellular formation of nitric oxide (NO) and hydrogen peroxide (H(2)O(2)), thus triggering host necrotic cell death. The trypacidin pathway is also able to produce endocrocin via a distinct route from the endocrocin Enc pathway. The protein is Glutathione S-transferase-like protein tpcF of Aspergillus fumigatus (strain ATCC MYA-4609 / CBS 101355 / FGSC A1100 / Af293) (Neosartorya fumigata).